Reading from the N-terminus, the 308-residue chain is MQEKISKFEDFLTQLQQNITTVLEQHETNAAKFISDKWQKPDTPDQKLKGYGNSMIIEGGEIFEKGVVAFSRVHGSELPPSATAKRQELAGKSFIATGLSLVIHPRNPFVPTSHANFRIFIADADTDNPIWWFGGGFDLTPYYPFEEDAIHWHQTAKNICDKHDKTYYPKFKKWCDEYFYLKHRDECRGVGGLFFDDLNDKSFDECFNFVTDCANSYLDAYIPIVAQRKNIEYSQKHKDFQLYRRGRYVEFNLVFDRGTIFGLQSGGRTESILSSMPPMATWKYNWQPELGSEEEKVYQYIKPRDWIK.

Ser100 contributes to the substrate binding site. Residues His104 and His114 each contribute to the a divalent metal cation site. The active-site Proton donor is His114. 116–118 contributes to the substrate binding site; that stretch reads NFR. Residues His153 and His183 each coordinate a divalent metal cation. Residues 248-283 are important for dimerization; that stretch reads YVEFNLVFDRGTIFGLQSGGRTESILSSMPPMATWK. 266 to 268 contacts substrate; it reads GGR.

It belongs to the aerobic coproporphyrinogen-III oxidase family. As to quaternary structure, homodimer. It depends on a divalent metal cation as a cofactor.

It localises to the cytoplasm. The enzyme catalyses coproporphyrinogen III + O2 + 2 H(+) = protoporphyrinogen IX + 2 CO2 + 2 H2O. The protein operates within porphyrin-containing compound metabolism; protoporphyrin-IX biosynthesis; protoporphyrinogen-IX from coproporphyrinogen-III (O2 route): step 1/1. In terms of biological role, involved in the heme biosynthesis. Catalyzes the aerobic oxidative decarboxylation of propionate groups of rings A and B of coproporphyrinogen-III to yield the vinyl groups in protoporphyrinogen-IX. This chain is Oxygen-dependent coproporphyrinogen-III oxidase, found in Francisella tularensis subsp. mediasiatica (strain FSC147).